Here is a 233-residue protein sequence, read N- to C-terminus: MKMKLVTAAVMGLAMSTAMAATDATSLATDKDKLSYSIGADLGKNFKNQGIDVNPEAMAKGMQDAMSGAQLALTEQQMKDVLNKFQKDLMAKRTAEFNKKADENKVKGEAFLTENKNKPGVVVLPSGLQYKVINSGNGVKPGKSDTVTVEYTGRLIDGTVFDSTEKTGKPATFQVSQVIPGWTEALQLMPAGSTWEIYVPSGLAYGPRSVGGPIGPNETLIFKIHLISVKKSS.

Residues 1–20 form the signal peptide; the sequence is MKMKLVTAAVMGLAMSTAMA. The region spanning 144-233 is the PPIase FKBP-type domain; sequence SDTVTVEYTG…IHLISVKKSS (90 aa).

This sequence belongs to the FKBP-type PPIase family.

It is found in the cell outer membrane. The enzyme catalyses [protein]-peptidylproline (omega=180) = [protein]-peptidylproline (omega=0). With respect to regulation, strongly inhibited by FK506 but is completely resistant to cyclosporin A. Its function is as follows. Essential virulence factor associated with macrophage infectivity. Exhibits PPIase activity. The chain is Outer membrane protein MIP (mip) from Legionella pneumophila subsp. pneumophila (strain Philadelphia 1 / ATCC 33152 / DSM 7513).